The sequence spans 1433 residues: Probable ATP-dependent RNA helicase spindle-E (1433 aa).

One can recognise a Helicase ATP-binding domain in the interval 126–294 (INAINENPVV…FANERSAPPV (169 aa)). Residue 139 to 146 (GETGCGKT) participates in ATP binding. A DEAH box motif is present at residues 240 to 243 (DEVH). The Helicase C-terminal domain occupies 355–526 (TGKSYNQSLR…NCVLKAKELK (172 aa)). The region spanning 935–998 (AGAITKGLML…RLMSQDLLRH (64 aa)) is the Tudor domain.

Belongs to the DEAD box helicase family. DEAH subfamily.

Its subcellular location is the cytoplasm. The catalysed reaction is ATP + H2O = ADP + phosphate + H(+). In terms of biological role, probable ATP-binding RNA helicase which plays a central role during spermatogenesis and oogenesis by repressing transposable elements and preventing their mobilization, which is essential for the germline integrity. Acts via the piRNA metabolic process, which mediates the repression of transposable elements during meiosis by forming complexes composed of piRNAs and Piwi and govern the methylation and subsequent repression of transposons. Involved in the repression of LTR retrotransposon copia. Also involved in telomere regulation by repressing specialized telomeric retroelements HeT-A, TAHRE, and TART; Drosophila telomeres being maintained by transposition of specialized telomeric retroelements. Involved in telomeric trans-silencing, a repression mechanism by which a transposon or a transgene inserted in subtelomeric heterochromatin has the capacity to repress in trans in the female germline, a homologous transposon, or transgene located in euchromatin. Involved in the repression of testis-expressed Stellate genes by the homologous Su(Ste) repeats. Required for anteroposterior and dorsoventral axis formation during oogenesis. In Drosophila pseudoobscura pseudoobscura (Fruit fly), this protein is Probable ATP-dependent RNA helicase spindle-E (spn-E).